The primary structure comprises 31 residues: Acetyl-CoA carboxylase (31 aa).

A disordered region spans residues 1 to 31; sequence RISSSVIAHKTQLDSGKREVYSSHMQLGGPK. Residues 11 to 21 show a composition bias toward basic and acidic residues; that stretch reads TQLDSGKREVY.

The enzyme catalyses hydrogencarbonate + acetyl-CoA + ATP = malonyl-CoA + ADP + phosphate + H(+). Its pathway is lipid metabolism; malonyl-CoA biosynthesis; malonyl-CoA from acetyl-CoA: step 1/1. This is Acetyl-CoA carboxylase from Catharanthus roseus (Madagascar periwinkle).